Reading from the N-terminus, the 59-residue chain is MANTIKVTQTKSSIGRLPKHVACLRGLGLRRINHTVELEDTACVRGMINKVHYMVKIEE.

This sequence belongs to the universal ribosomal protein uL30 family. Part of the 50S ribosomal subunit.

The protein is Large ribosomal subunit protein uL30 of Photobacterium profundum (strain SS9).